A 216-amino-acid polypeptide reads, in one-letter code: Ras-related protein Rab11A (216 aa).

GTP contacts are provided by residues 19–27, 38–44, 67–71, 125–128, and 155–157; these read GDSGVGKSN, CLESKST, DTAGQ, NKSD, and SAL. Positions 41–49 match the Effector region motif; sequence SKSTIGVEF. Residues Cys213 and Cys214 are each lipidated (S-geranylgeranyl cysteine).

This sequence belongs to the small GTPase superfamily. Rab family.

The protein resides in the cell membrane. The sequence is that of Ras-related protein Rab11A (RAB11A) from Nicotiana tabacum (Common tobacco).